The primary structure comprises 187 residues: Elongation factor P (187 aa).

The protein belongs to the elongation factor P family.

It is found in the cytoplasm. Its pathway is protein biosynthesis; polypeptide chain elongation. Functionally, involved in peptide bond synthesis. Stimulates efficient translation and peptide-bond synthesis on native or reconstituted 70S ribosomes in vitro. Probably functions indirectly by altering the affinity of the ribosome for aminoacyl-tRNA, thus increasing their reactivity as acceptors for peptidyl transferase. This chain is Elongation factor P, found in Parafrankia sp. (strain EAN1pec).